The primary structure comprises 180 residues: Large ribosomal subunit protein uL6 (180 aa).

It belongs to the universal ribosomal protein uL6 family. In terms of assembly, part of the 50S ribosomal subunit.

In terms of biological role, this protein binds to the 23S rRNA, and is important in its secondary structure. It is located near the subunit interface in the base of the L7/L12 stalk, and near the tRNA binding site of the peptidyltransferase center. The polypeptide is Large ribosomal subunit protein uL6 (Dictyoglomus turgidum (strain DSM 6724 / Z-1310)).